A 222-amino-acid polypeptide reads, in one-letter code: Ras-related protein RABA4d (222 aa).

Gly22–Thr29 is a GTP binding site. The Effector region motif lies at Ser44–Phe52. GTP-binding positions include Asp70–Gln74, Asn128–Asp131, and Ser158–Ala159. S-geranylgeranyl cysteine attachment occurs at residues Cys218 and Cys219.

The protein belongs to the small GTPase superfamily. Rab family. As to quaternary structure, interacts with PI4KB1. As to expression, specifically expressed in pollen and localized to the tips of growing pollen tubes.

The protein localises to the cytoplasmic vesicle membrane. Functionally, intracellular vesicle trafficking and protein transport. Plays an important role in the regulation of pollen tube tip growth. This Arabidopsis thaliana (Mouse-ear cress) protein is Ras-related protein RABA4d (RABA4D).